We begin with the raw amino-acid sequence, 186 residues long: Ribosome-recycling factor (186 aa).

It belongs to the RRF family.

The protein localises to the cytoplasm. Functionally, responsible for the release of ribosomes from messenger RNA at the termination of protein biosynthesis. May increase the efficiency of translation by recycling ribosomes from one round of translation to another. The polypeptide is Ribosome-recycling factor (Cupriavidus pinatubonensis (strain JMP 134 / LMG 1197) (Cupriavidus necator (strain JMP 134))).